A 239-amino-acid polypeptide reads, in one-letter code: Fatty acid metabolism regulator protein (239 aa).

Residues glutamine 6–phenylalanine 74 enclose the HTH gntR-type domain. A DNA-binding region (H-T-H motif) is located at residues glutamate 34–glutamine 53.

In terms of assembly, homodimer.

The protein resides in the cytoplasm. Functionally, multifunctional regulator of fatty acid metabolism. The polypeptide is Fatty acid metabolism regulator protein (Cronobacter sakazakii (strain ATCC BAA-894) (Enterobacter sakazakii)).